We begin with the raw amino-acid sequence, 176 residues long: NAD(P)H-quinone oxidoreductase subunit J (176 aa).

The interval 1–32 (MEKEGLAKSSDTSIKKEGFISQSLSKDGIPNQ) is disordered. Over residues 20 to 32 (ISQSLSKDGIPNQ) the composition is skewed to polar residues.

The protein belongs to the complex I 30 kDa subunit family. In terms of assembly, NDH-1 can be composed of about 15 different subunits; different subcomplexes with different compositions have been identified which probably have different functions.

It localises to the cellular thylakoid membrane. It carries out the reaction a plastoquinone + NADH + (n+1) H(+)(in) = a plastoquinol + NAD(+) + n H(+)(out). The enzyme catalyses a plastoquinone + NADPH + (n+1) H(+)(in) = a plastoquinol + NADP(+) + n H(+)(out). Its function is as follows. NDH-1 shuttles electrons from an unknown electron donor, via FMN and iron-sulfur (Fe-S) centers, to quinones in the respiratory and/or the photosynthetic chain. The immediate electron acceptor for the enzyme in this species is believed to be plastoquinone. Couples the redox reaction to proton translocation, and thus conserves the redox energy in a proton gradient. Cyanobacterial NDH-1 also plays a role in inorganic carbon-concentration. This is NAD(P)H-quinone oxidoreductase subunit J from Prochlorococcus marinus (strain MIT 9215).